Reading from the N-terminus, the 208-residue chain is Holliday junction branch migration complex subunit RuvA (208 aa).

Residues 1–64 (MIGKLKGIVD…EDMIRLYGFR (64 aa)) are domain I. The interval 65-143 (SDAEREWFRL…AFAPVDPALV (79 aa)) is domain II. The segment at 144–152 (ALTGAVEDR) is flexible linker. Residues 153–208 (TAPQPVADAISALVNLGYPQVQASAAIAAALKGLGDGAETVEAKTLIRLGLRELAR) are domain III.

It belongs to the RuvA family. As to quaternary structure, homotetramer. Forms an RuvA(8)-RuvB(12)-Holliday junction (HJ) complex. HJ DNA is sandwiched between 2 RuvA tetramers; dsDNA enters through RuvA and exits via RuvB. An RuvB hexamer assembles on each DNA strand where it exits the tetramer. Each RuvB hexamer is contacted by two RuvA subunits (via domain III) on 2 adjacent RuvB subunits; this complex drives branch migration. In the full resolvosome a probable DNA-RuvA(4)-RuvB(12)-RuvC(2) complex forms which resolves the HJ.

It is found in the cytoplasm. The RuvA-RuvB-RuvC complex processes Holliday junction (HJ) DNA during genetic recombination and DNA repair, while the RuvA-RuvB complex plays an important role in the rescue of blocked DNA replication forks via replication fork reversal (RFR). RuvA specifically binds to HJ cruciform DNA, conferring on it an open structure. The RuvB hexamer acts as an ATP-dependent pump, pulling dsDNA into and through the RuvAB complex. HJ branch migration allows RuvC to scan DNA until it finds its consensus sequence, where it cleaves and resolves the cruciform DNA. The sequence is that of Holliday junction branch migration complex subunit RuvA from Methylorubrum populi (strain ATCC BAA-705 / NCIMB 13946 / BJ001) (Methylobacterium populi).